The sequence spans 99 residues: Protein S100-Z (99 aa).

EF-hand domains follow at residues 13–48 (IRIFHRYSGKERKRFKLSKGELKLLLQRELTEFLSC) and 50–85 (KETQLVDKIVQDLDANKDNEVDFNEFVVMVAALTVA). The Ca(2+) site is built by Ser-20, Glu-23, Lys-28, Glu-33, Asp-63, Asn-65, Asp-67, Glu-69, and Glu-74.

This sequence belongs to the S-100 family. As to quaternary structure, homodimer. Interacts with S100P. In terms of tissue distribution, highest level of expression in spleen and leukocytes.

This Homo sapiens (Human) protein is Protein S100-Z.